The sequence spans 227 residues: Esterase OVCA2 (227 aa).

Active-site charge relay system residues include Ser-120, Asp-180, and His-207.

Belongs to the LovG family.

The catalysed reaction is a carboxylic ester + H2O = an alcohol + a carboxylate + H(+). Functionally, exhibits ester hydrolase activity with a strong preference for long-chain alkyl ester substrates and high selectivity against a variety of short, branched, and substituted esters. Is able to hydrolyze ester bonds within a wide range of p-nitrophenyl derivatives (C2-C14) in vitro, with a strong preference toward substrates of &gt;8 carbons. This Danio rerio (Zebrafish) protein is Esterase OVCA2 (ovca2).